We begin with the raw amino-acid sequence, 346 residues long: UDP-N-acetylenolpyruvoylglucosamine reductase (346 aa).

One can recognise an FAD-binding PCMH-type domain in the interval 18–189 (LHAQARAFIA…VSVVFALKTH (172 aa)). The active site involves Arg165. Ser240 acts as the Proton donor in catalysis. Residue Glu336 is part of the active site.

Belongs to the MurB family. FAD is required as a cofactor.

The protein localises to the cytoplasm. It carries out the reaction UDP-N-acetyl-alpha-D-muramate + NADP(+) = UDP-N-acetyl-3-O-(1-carboxyvinyl)-alpha-D-glucosamine + NADPH + H(+). The protein operates within cell wall biogenesis; peptidoglycan biosynthesis. Functionally, cell wall formation. The chain is UDP-N-acetylenolpyruvoylglucosamine reductase from Neisseria gonorrhoeae (strain ATCC 700825 / FA 1090).